The following is a 241-amino-acid chain: Carboxy-S-adenosyl-L-methionine synthase (241 aa).

Residues Tyr38, 63-65, 88-89, 116-117, Asn131, and Arg198 contribute to the S-adenosyl-L-methionine site; these read GCS, DN, and DI.

The protein belongs to the class I-like SAM-binding methyltransferase superfamily. Cx-SAM synthase family. In terms of assembly, homodimer.

It catalyses the reaction prephenate + S-adenosyl-L-methionine = carboxy-S-adenosyl-L-methionine + 3-phenylpyruvate + H2O. Its function is as follows. Catalyzes the conversion of S-adenosyl-L-methionine (SAM) to carboxy-S-adenosyl-L-methionine (Cx-SAM). The chain is Carboxy-S-adenosyl-L-methionine synthase from Actinobacillus succinogenes (strain ATCC 55618 / DSM 22257 / CCUG 43843 / 130Z).